The following is a 267-amino-acid chain: 2-keto-3-deoxy-L-rhamnonate aldolase (267 aa).

His-49 serves as the catalytic Proton acceptor. Gln-151 is a substrate binding site. Glu-153 is a Mg(2+) binding site. Residues Ala-178 and Asp-179 each coordinate substrate. A Mg(2+)-binding site is contributed by Asp-179.

This sequence belongs to the HpcH/HpaI aldolase family. KDR aldolase subfamily. As to quaternary structure, homohexamer. Requires Mg(2+) as cofactor.

It catalyses the reaction 2-dehydro-3-deoxy-L-rhamnonate = (S)-lactaldehyde + pyruvate. In terms of biological role, catalyzes the reversible retro-aldol cleavage of 2-keto-3-deoxy-L-rhamnonate (KDR) to pyruvate and lactaldehyde. The protein is 2-keto-3-deoxy-L-rhamnonate aldolase of Salmonella typhi.